A 385-amino-acid polypeptide reads, in one-letter code: 1-deoxy-D-xylulose 5-phosphate reductoisomerase (385 aa).

Threonine 10, glycine 11, serine 12, isoleucine 13, and asparagine 124 together coordinate NADPH. Lysine 125 serves as a coordination point for 1-deoxy-D-xylulose 5-phosphate. An NADPH-binding site is contributed by glutamate 126. Aspartate 150 lines the Mn(2+) pocket. Residues serine 151, glutamate 152, serine 176, and histidine 199 each coordinate 1-deoxy-D-xylulose 5-phosphate. Glutamate 152 contacts Mn(2+). NADPH is bound at residue glycine 205. 1-deoxy-D-xylulose 5-phosphate contacts are provided by serine 212, asparagine 217, lysine 218, and glutamate 221. Residue glutamate 221 participates in Mn(2+) binding.

Belongs to the DXR family. Mg(2+) serves as cofactor. The cofactor is Mn(2+).

It catalyses the reaction 2-C-methyl-D-erythritol 4-phosphate + NADP(+) = 1-deoxy-D-xylulose 5-phosphate + NADPH + H(+). It functions in the pathway isoprenoid biosynthesis; isopentenyl diphosphate biosynthesis via DXP pathway; isopentenyl diphosphate from 1-deoxy-D-xylulose 5-phosphate: step 1/6. Catalyzes the NADPH-dependent rearrangement and reduction of 1-deoxy-D-xylulose-5-phosphate (DXP) to 2-C-methyl-D-erythritol 4-phosphate (MEP). The protein is 1-deoxy-D-xylulose 5-phosphate reductoisomerase of Clostridium botulinum (strain Eklund 17B / Type B).